Consider the following 403-residue polypeptide: SH3 and cysteine-rich domain-containing protein (403 aa).

Residues 1–51 (MIPPSGAREDSGDGLTGEATGTEQPPSPASTSSLESKLQKLKRSLSFKTKS) are disordered. Residues 19–36 (ATGTEQPPSPASTSSLES) are compositionally biased toward polar residues. Positions 39 to 51 (QKLKRSLSFKTKS) are enriched in basic residues. A Phorbol-ester/DAG-type zinc finger spans residues 108–160 (LHAFQEHVFKKPTFCDVCNHMIVGTHAKHGLRCGACKMSIHHKCADGLAPQRC). The tract at residues 212 to 264 (QRTKKGGSGSGSDSPPRTSTSELVDVPEEADGPGDGSDMRTRSNSVFTYPENG) is disordered. Over residues 222–232 (GSDSPPRTSTS) the composition is skewed to low complexity. SH3 domains follow at residues 286–345 (LQMN…RVEE) and 348–403 (KIYR…LVDV).

Interacts (via SH3 domains) with CACNA1S. Interacts with CACNA1H. Interacts with CACNA1C. Expressed predominantly in brain Detected in brain neurons, more specifically in hippocampus, cerebellum and inferior olive. Highly expressed in urinary bladder, and detected at lower levels in adrenal gland. Detected at very low levels in heart, liver, lung and kidney.

It is found in the cytoplasm. The protein resides in the cytosol. Its subcellular location is the cell membrane. It localises to the sarcolemma. Promotes expression of the ion channel CACNA1H at the cell membrane, and thereby contributes to the regulation of channel activity. Plays a minor and redundant role in promoting the expression of calcium channel CACNA1S at the cell membrane, and thereby contributes to increased channel activity. Slows the rate of calcium-mediated inactivation of CACNA1C calcium channel activity. This chain is SH3 and cysteine-rich domain-containing protein, found in Mus musculus (Mouse).